We begin with the raw amino-acid sequence, 177 residues long: Interleukin-1 receptor antagonist protein (177 aa).

The signal sequence occupies residues 1–25 (MEVCRCHHGYLISLLLFLFHSETAC). A disulfide bridge links Cys91 with Cys141. Residues Asn109 and Asn114 are each glycosylated (N-linked (GlcNAc...) asparagine).

It belongs to the IL-1 family.

It localises to the secreted. Functionally, anti-inflammatory antagonist of interleukin-1 family of proinflammatory cytokines such as interleukin-1beta/IL1B and interleukin-1alpha/IL1A. Protects from immune dysregulation and uncontrolled systemic inflammation triggered by IL1 for a range of innate stimulatory agents such as pathogens. The polypeptide is Interleukin-1 receptor antagonist protein (IL1RN) (Tursiops truncatus (Atlantic bottle-nosed dolphin)).